The sequence spans 99 residues: MTDTALIAELWDVIVDRRLHPVEGSYVNSLLSHRKGIDKPLEKVGEEATEFILAVKNGESDRIAEEAADLLFHMLVALNAADVDLSLVLDELASRRRSR.

This sequence belongs to the PRA-PH family.

The protein resides in the cytoplasm. It catalyses the reaction 1-(5-phospho-beta-D-ribosyl)-ATP + H2O = 1-(5-phospho-beta-D-ribosyl)-5'-AMP + diphosphate + H(+). It participates in amino-acid biosynthesis; L-histidine biosynthesis; L-histidine from 5-phospho-alpha-D-ribose 1-diphosphate: step 2/9. This Methanosphaerula palustris (strain ATCC BAA-1556 / DSM 19958 / E1-9c) protein is Phosphoribosyl-ATP pyrophosphatase.